We begin with the raw amino-acid sequence, 428 residues long: Aminotransferase verI (428 aa).

K254 carries the post-translational modification N6-(pyridoxal phosphate)lysine.

It belongs to the class-I pyridoxal-phosphate-dependent aminotransferase family. Pyridoxal 5'-phosphate is required as a cofactor.

The protein operates within mycotoxin biosynthesis. Functionally, aminotransferase; part of the gene cluster that mediates the biosynthesis of 11'-deoxyverticillin A, one of the dimeric epipolythiodioxopiperazines (ETPs) from the verticillin family that act as mycotoxins. 11'-deoxyverticillin A is required for normal conidiation. The nonribosomal peptide synthetase verP is speculated to be responsible for condensation of amino acids to form the carbon skeleton of verticillin, whereas the cluster-specific tailoring enzymes are involved in further modifications leading to the production of 11'-deoxyverticillin A. This chain is Aminotransferase verI, found in Clonostachys rogersoniana.